The sequence spans 292 residues: 4-hydroxy-tetrahydrodipicolinate synthase (292 aa).

Residue Thr-45 coordinates pyruvate. Tyr-133 functions as the Proton donor/acceptor in the catalytic mechanism. The active-site Schiff-base intermediate with substrate is the Lys-162. Ile-204 is a binding site for pyruvate.

The protein belongs to the DapA family. Homotetramer; dimer of dimers.

The protein resides in the cytoplasm. The enzyme catalyses L-aspartate 4-semialdehyde + pyruvate = (2S,4S)-4-hydroxy-2,3,4,5-tetrahydrodipicolinate + H2O + H(+). It participates in amino-acid biosynthesis; L-lysine biosynthesis via DAP pathway; (S)-tetrahydrodipicolinate from L-aspartate: step 3/4. Functionally, catalyzes the condensation of (S)-aspartate-beta-semialdehyde [(S)-ASA] and pyruvate to 4-hydroxy-tetrahydrodipicolinate (HTPA). The polypeptide is 4-hydroxy-tetrahydrodipicolinate synthase (Nitratidesulfovibrio vulgaris (strain DSM 19637 / Miyazaki F) (Desulfovibrio vulgaris)).